We begin with the raw amino-acid sequence, 292 residues long: 2-(5''-triphosphoribosyl)-3'-dephosphocoenzyme-A synthase (292 aa).

It belongs to the CitG/MdcB family.

It carries out the reaction 3'-dephospho-CoA + ATP = 2'-(5''-triphospho-alpha-D-ribosyl)-3'-dephospho-CoA + adenine. In terms of biological role, catalyzes the formation of 2-(5''-triphosphoribosyl)-3'-dephosphocoenzyme-A, the precursor of the prosthetic group of the holo-acyl carrier protein (gamma chain) of citrate lyase, from ATP and dephospho-CoA. In Escherichia coli O17:K52:H18 (strain UMN026 / ExPEC), this protein is 2-(5''-triphosphoribosyl)-3'-dephosphocoenzyme-A synthase.